The following is an 890-amino-acid chain: Translation initiation factor IF-2 (890 aa).

The segment at 45–304 (LIDHLNQKNS…LQQGFQKPAQ (260 aa)) is disordered. Residues 67–81 (STLNIPGTGGKSKSV) are compositionally biased toward polar residues. The segment covering 92 to 217 (VKRDPQEAER…RMAEENKWTD (126 aa)) has biased composition (basic and acidic residues). Over residues 252-266 (GRGRNAKAARPKKGN) the composition is skewed to basic residues. The span at 267-280 (KHAESKADREEARA) shows a compositional bias: basic and acidic residues. The region spanning 389–558 (PRAPVVTIMG…LLQAEVLELK (170 aa)) is the tr-type G domain. Residues 398–405 (GHVDHGKT) are G1. Position 398 to 405 (398 to 405 (GHVDHGKT)) interacts with GTP. Residues 423 to 427 (GITQH) are G2. Positions 444-447 (DTPG) are G3. GTP-binding positions include 444-448 (DTPGH) and 498-501 (NKID). A G4 region spans residues 498–501 (NKID). The segment at 534 to 536 (SAK) is G5. Residue lysine 808 is modified to N6-acetyllysine.

Belongs to the TRAFAC class translation factor GTPase superfamily. Classic translation factor GTPase family. IF-2 subfamily.

Its subcellular location is the cytoplasm. One of the essential components for the initiation of protein synthesis. Protects formylmethionyl-tRNA from spontaneous hydrolysis and promotes its binding to the 30S ribosomal subunits. Also involved in the hydrolysis of GTP during the formation of the 70S ribosomal complex. The protein is Translation initiation factor IF-2 of Shigella sonnei (strain Ss046).